Consider the following 693-residue polypeptide: Polyribonucleotide nucleotidyltransferase (693 aa).

Residues Asp487 and Asp493 each contribute to the Mg(2+) site. The KH domain occupies 554–613; sequence PRIYTIKINPEKIKDVIGKGGSIIRMLTEETGTVIEIKDDGIVKISAINGEKAKYAIKRI. Residues 623–691 form the S1 motif domain; sequence GKIYSGKVTR…RQGRIRLSMK (69 aa).

Belongs to the polyribonucleotide nucleotidyltransferase family. Component of the RNA degradosome, which is a multiprotein complex involved in RNA processing and mRNA degradation. The cofactor is Mg(2+).

It localises to the cytoplasm. The enzyme catalyses RNA(n+1) + phosphate = RNA(n) + a ribonucleoside 5'-diphosphate. Functionally, involved in mRNA degradation. Catalyzes the phosphorolysis of single-stranded polyribonucleotides processively in the 3'- to 5'-direction. The chain is Polyribonucleotide nucleotidyltransferase from Buchnera aphidicola subsp. Cinara cedri (strain Cc).